The sequence spans 362 residues: HMG box-containing protein C19G7.04 (362 aa).

Residues 135–299 (KCFLARLEDE…RLCKSQIKQI (165 aa)) enclose the SprT-like domain. Positions 306-348 (PNAFQIFLKENSKRLRKLHPHITHKELMKKLSDEYHRTKDAKQ) form a DNA-binding region, HMG box.

Its subcellular location is the nucleus. The protein resides in the cytoplasm. The protein localises to the cytoskeleton. It localises to the spindle. In Schizosaccharomyces pombe (strain 972 / ATCC 24843) (Fission yeast), this protein is HMG box-containing protein C19G7.04.